The chain runs to 1174 residues: DNA-directed RNA polymerase subunit beta (1174 aa).

This sequence belongs to the RNA polymerase beta chain family. As to quaternary structure, the RNAP catalytic core consists of 2 alpha, 1 beta, 1 beta' and 1 omega subunit. When a sigma factor is associated with the core the holoenzyme is formed, which can initiate transcription.

The catalysed reaction is RNA(n) + a ribonucleoside 5'-triphosphate = RNA(n+1) + diphosphate. Its function is as follows. DNA-dependent RNA polymerase catalyzes the transcription of DNA into RNA using the four ribonucleoside triphosphates as substrates. The sequence is that of DNA-directed RNA polymerase subunit beta from Mycolicibacterium gilvum (strain PYR-GCK) (Mycobacterium gilvum (strain PYR-GCK)).